The primary structure comprises 142 residues: Transcriptional regulator MraZ (142 aa).

SpoVT-AbrB domains lie at 5–47 (EYQH…PLDE) and 76–119 (ACEV…SKEK).

It belongs to the MraZ family. As to quaternary structure, forms oligomers.

Its subcellular location is the cytoplasm. It localises to the nucleoid. The protein is Transcriptional regulator MraZ of Clostridium beijerinckii (strain ATCC 51743 / NCIMB 8052) (Clostridium acetobutylicum).